The sequence spans 425 residues: UDP-N-acetylglucosamine 1-carboxyvinyltransferase (425 aa).

22-23 provides a ligand contact to phosphoenolpyruvate; that stretch reads KN. Residue arginine 98 coordinates UDP-N-acetyl-alpha-D-glucosamine. The active-site Proton donor is cysteine 122. Cysteine 122 carries the post-translational modification 2-(S-cysteinyl)pyruvic acid O-phosphothioketal. Residues 127–131, aspartate 313, and isoleucine 335 each bind UDP-N-acetyl-alpha-D-glucosamine; that span reads RPVDQ.

It belongs to the EPSP synthase family. MurA subfamily.

It is found in the cytoplasm. It carries out the reaction phosphoenolpyruvate + UDP-N-acetyl-alpha-D-glucosamine = UDP-N-acetyl-3-O-(1-carboxyvinyl)-alpha-D-glucosamine + phosphate. It functions in the pathway cell wall biogenesis; peptidoglycan biosynthesis. Functionally, cell wall formation. Adds enolpyruvyl to UDP-N-acetylglucosamine. This is UDP-N-acetylglucosamine 1-carboxyvinyltransferase from Xylella fastidiosa (strain M12).